Consider the following 406-residue polypeptide: Imidazolonepropionase (406 aa).

Fe(3+) is bound by residues H72 and H74. The Zn(2+) site is built by H72 and H74. 4-imidazolone-5-propanoate is bound by residues R81, Y144, and H177. Y144 contacts N-formimidoyl-L-glutamate. H242 is a Fe(3+) binding site. H242 contacts Zn(2+). Q245 contributes to the 4-imidazolone-5-propanoate binding site. D317 provides a ligand contact to Fe(3+). D317 contributes to the Zn(2+) binding site. The N-formimidoyl-L-glutamate site is built by N319 and G321. Residue T322 coordinates 4-imidazolone-5-propanoate.

It belongs to the metallo-dependent hydrolases superfamily. HutI family. Zn(2+) serves as cofactor. Fe(3+) is required as a cofactor.

It localises to the cytoplasm. The enzyme catalyses 4-imidazolone-5-propanoate + H2O = N-formimidoyl-L-glutamate. It functions in the pathway amino-acid degradation; L-histidine degradation into L-glutamate; N-formimidoyl-L-glutamate from L-histidine: step 3/3. In terms of biological role, catalyzes the hydrolytic cleavage of the carbon-nitrogen bond in imidazolone-5-propanoate to yield N-formimidoyl-L-glutamate. It is the third step in the universal histidine degradation pathway. The sequence is that of Imidazolonepropionase from Yersinia enterocolitica serotype O:8 / biotype 1B (strain NCTC 13174 / 8081).